The following is a 422-amino-acid chain: Tyrosine--tRNA ligase (422 aa).

Residue tyrosine 37 coordinates L-tyrosine. A 'HIGH' region motif is present at residues 42 to 51 (PTEESLHIGH). The L-tyrosine site is built by tyrosine 175 and glutamine 179. Residues 235–239 (KFGKT) carry the 'KMSKS' region motif. An ATP-binding site is contributed by lysine 238. One can recognise an S4 RNA-binding domain in the interval 357–414 (KDLQEALVLTSLAQSRTQAKNMIISNSISINTEKIRKNHIFHEKDKLFGKFTLLSRGK).

This sequence belongs to the class-I aminoacyl-tRNA synthetase family. TyrS type 1 subfamily. In terms of assembly, homodimer.

It is found in the cytoplasm. It catalyses the reaction tRNA(Tyr) + L-tyrosine + ATP = L-tyrosyl-tRNA(Tyr) + AMP + diphosphate + H(+). Catalyzes the attachment of tyrosine to tRNA(Tyr) in a two-step reaction: tyrosine is first activated by ATP to form Tyr-AMP and then transferred to the acceptor end of tRNA(Tyr). This is Tyrosine--tRNA ligase from Buchnera aphidicola subsp. Acyrthosiphon pisum (strain 5A).